Consider the following 474-residue polypeptide: Pleckstrin homology domain-containing family S member 1 (474 aa).

One can recognise a PH domain in the interval 20 to 135 (EVHKRDYFIK…WVSFMTPYCQ (116 aa)). Disordered regions lie at residues 232–251 (IAGP…DQGF), 272–321 (STSA…DDQK), and 449–474 (RDLP…AAGE). The segment covering 238–248 (SGDSIESNSPD) has biased composition (polar residues). The segment covering 449–458 (RDLPELERTP) has biased composition (basic and acidic residues).

The sequence is that of Pleckstrin homology domain-containing family S member 1 from Mus musculus (Mouse).